The chain runs to 599 residues: Elongation factor 4 (599 aa).

The 183-residue stretch at 2-184 (KNIRNFSIIA…RLVRDIPPPE (183 aa)) folds into the tr-type G domain. GTP contacts are provided by residues 14–19 (DHGKST) and 131–134 (NKID).

The protein belongs to the TRAFAC class translation factor GTPase superfamily. Classic translation factor GTPase family. LepA subfamily.

The protein resides in the cell inner membrane. The catalysed reaction is GTP + H2O = GDP + phosphate + H(+). In terms of biological role, required for accurate and efficient protein synthesis under certain stress conditions. May act as a fidelity factor of the translation reaction, by catalyzing a one-codon backward translocation of tRNAs on improperly translocated ribosomes. Back-translocation proceeds from a post-translocation (POST) complex to a pre-translocation (PRE) complex, thus giving elongation factor G a second chance to translocate the tRNAs correctly. Binds to ribosomes in a GTP-dependent manner. The sequence is that of Elongation factor 4 from Citrobacter koseri (strain ATCC BAA-895 / CDC 4225-83 / SGSC4696).